The sequence spans 647 residues: Pumilio homolog 3 (647 aa).

The span at 1-10 (MEVKGKKKIT) shows a compositional bias: basic residues. Residues 1-123 (MEVKGKKKIT…KKKKELKQNR (123 aa)) are disordered. Lysine 33 is subject to N6-acetyllysine. The span at 59 to 68 (PGKKRVKQFK) shows a compositional bias: basic residues. Basic and acidic residues predominate over residues 93–123 (FQPDGKSDESAAKKPKWDDFKKKKKELKQNR). The short motif at 105 to 117 (KKPKWDDFKKKKK) is the Nuclear localization signal element. A PUM-HD domain is found at 142–509 (ESLRRKDCDK…VVLDKSVCVL (368 aa)). Pumilio repeat units lie at residues 176–211 (HDST…LSKA), 212–247 (KYSR…MLRH), 248–276 (SEAS…ELYG), 288–324 (PTLE…VIKH), 325–360 (SLVH…LAHT), 361–396 (HDGA…IANG), 397–434 (QYSH…IVND), 435–503 (KYGR…VVLD), 504–550 (KSVC…IAEH), 551–595 (PAGH…WASI), and 596–635 (NRGA…KSTS).

In terms of assembly, interacts with PARP1 (via catalytic domain).

The protein resides in the nucleus. It is found in the nucleolus. The protein localises to the nucleoplasm. It localises to the chromosome. Functionally, inhibits the poly(ADP-ribosyl)ation activity of PARP1 and the degradation of PARP1 by CASP3 following genotoxic stress. Binds to double-stranded RNA or DNA without sequence specificity. Involved in development of the eye and of primordial germ cells. This chain is Pumilio homolog 3, found in Rattus norvegicus (Rat).